The following is a 191-amino-acid chain: Salivary lipocalin (191 aa).

An N-terminal signal peptide occupies residues 1–16 (MKLLLLLCLGLTLASS). A glycan (N-linked (GlcNAc...) asparagine) is linked at N69. An intrachain disulfide couples C84 to C176.

It belongs to the calycin superfamily. Lipocalin family. As to quaternary structure, homodimer. In the submaxillary salivary glands of mature male pigs, but absent from that of females. Expression was much lower in submaxillary glands of castrated male pigs than in sexually mature individuals.

It is found in the secreted. Functionally, binds pheromones, the pheromones are released from the saliva of males and affect the sexual behavior of females. The sequence is that of Salivary lipocalin (SAL1) from Sus scrofa (Pig).